The chain runs to 699 residues: Elongation factor G (699 aa).

Positions 8 to 283 (EHIRNIGICA…AVVDFLPSPI (276 aa)) constitute a tr-type G domain. GTP contacts are provided by residues 17-24 (AHIDAGKT), 81-85 (DTPGH), and 135-138 (NKMD).

It belongs to the TRAFAC class translation factor GTPase superfamily. Classic translation factor GTPase family. EF-G/EF-2 subfamily.

Its subcellular location is the cytoplasm. Its function is as follows. Catalyzes the GTP-dependent ribosomal translocation step during translation elongation. During this step, the ribosome changes from the pre-translocational (PRE) to the post-translocational (POST) state as the newly formed A-site-bound peptidyl-tRNA and P-site-bound deacylated tRNA move to the P and E sites, respectively. Catalyzes the coordinated movement of the two tRNA molecules, the mRNA and conformational changes in the ribosome. The chain is Elongation factor G from Rickettsia conorii (strain ATCC VR-613 / Malish 7).